The primary structure comprises 102 residues: Integration host factor subunit beta (102 aa).

The disordered stretch occupies residues 54–102 (HHRPARMGRNPKTGEPVALPAKYVPHFKPGKELRERVNSSRHQAPLRSQ). A compositionally biased stretch (basic and acidic residues) spans 82-91 (PGKELRERVN). The segment covering 93-102 (SRHQAPLRSQ) has biased composition (polar residues).

This sequence belongs to the bacterial histone-like protein family. In terms of assembly, heterodimer of an alpha and a beta chain.

Its function is as follows. This protein is one of the two subunits of integration host factor, a specific DNA-binding protein that functions in genetic recombination as well as in transcriptional and translational control. The sequence is that of Integration host factor subunit beta from Halorhodospira halophila (strain DSM 244 / SL1) (Ectothiorhodospira halophila (strain DSM 244 / SL1)).